Consider the following 466-residue polypeptide: Cysteine--tRNA ligase (466 aa).

Cys28 contributes to the Zn(2+) binding site. A 'HIGH' region motif is present at residues 30 to 40; sequence PTVYNYIHIGN. The Zn(2+) site is built by Cys208, His233, and Glu237. A 'KMSKS' region motif is present at residues 265–269; sequence KMSKS. Lys268 contributes to the ATP binding site.

It belongs to the class-I aminoacyl-tRNA synthetase family. In terms of assembly, monomer. Requires Zn(2+) as cofactor.

The protein resides in the cytoplasm. It catalyses the reaction tRNA(Cys) + L-cysteine + ATP = L-cysteinyl-tRNA(Cys) + AMP + diphosphate. The polypeptide is Cysteine--tRNA ligase (Staphylococcus epidermidis (strain ATCC 35984 / DSM 28319 / BCRC 17069 / CCUG 31568 / BM 3577 / RP62A)).